The chain runs to 180 residues: Large ribosomal subunit protein uL5 (180 aa).

Belongs to the universal ribosomal protein uL5 family. Part of the 50S ribosomal subunit; part of the 5S rRNA/L5/L18/L25 subcomplex. Contacts the 5S rRNA and the P site tRNA. Forms a bridge to the 30S subunit in the 70S ribosome.

Functionally, this is one of the proteins that bind and probably mediate the attachment of the 5S RNA into the large ribosomal subunit, where it forms part of the central protuberance. In the 70S ribosome it contacts protein S13 of the 30S subunit (bridge B1b), connecting the 2 subunits; this bridge is implicated in subunit movement. Contacts the P site tRNA; the 5S rRNA and some of its associated proteins might help stabilize positioning of ribosome-bound tRNAs. This chain is Large ribosomal subunit protein uL5, found in Streptococcus pyogenes serotype M1.